The primary structure comprises 310 residues: Nucleotide-binding protein Mmc1_3333 (310 aa).

Residue 19–26 (GLSGAGKS) participates in ATP binding.

It belongs to the RapZ-like family.

In terms of biological role, displays ATPase and GTPase activities. This is Nucleotide-binding protein Mmc1_3333 from Magnetococcus marinus (strain ATCC BAA-1437 / JCM 17883 / MC-1).